The sequence spans 289 residues: Ribosomal RNA small subunit methyltransferase A (289 aa).

Asparagine 33, valine 35, glycine 60, glutamate 81, aspartate 111, and asparagine 130 together coordinate S-adenosyl-L-methionine.

It belongs to the class I-like SAM-binding methyltransferase superfamily. rRNA adenine N(6)-methyltransferase family. RsmA subfamily.

Its subcellular location is the cytoplasm. The catalysed reaction is adenosine(1518)/adenosine(1519) in 16S rRNA + 4 S-adenosyl-L-methionine = N(6)-dimethyladenosine(1518)/N(6)-dimethyladenosine(1519) in 16S rRNA + 4 S-adenosyl-L-homocysteine + 4 H(+). Specifically dimethylates two adjacent adenosines (A1518 and A1519) in the loop of a conserved hairpin near the 3'-end of 16S rRNA in the 30S particle. May play a critical role in biogenesis of 30S subunits. The protein is Ribosomal RNA small subunit methyltransferase A of Corynebacterium efficiens (strain DSM 44549 / YS-314 / AJ 12310 / JCM 11189 / NBRC 100395).